The primary structure comprises 96 residues: Aspartyl/glutamyl-tRNA(Asn/Gln) amidotransferase subunit C (96 aa).

This sequence belongs to the GatC family. As to quaternary structure, heterotrimer of A, B and C subunits.

The catalysed reaction is L-glutamyl-tRNA(Gln) + L-glutamine + ATP + H2O = L-glutaminyl-tRNA(Gln) + L-glutamate + ADP + phosphate + H(+). It catalyses the reaction L-aspartyl-tRNA(Asn) + L-glutamine + ATP + H2O = L-asparaginyl-tRNA(Asn) + L-glutamate + ADP + phosphate + 2 H(+). Functionally, allows the formation of correctly charged Asn-tRNA(Asn) or Gln-tRNA(Gln) through the transamidation of misacylated Asp-tRNA(Asn) or Glu-tRNA(Gln) in organisms which lack either or both of asparaginyl-tRNA or glutaminyl-tRNA synthetases. The reaction takes place in the presence of glutamine and ATP through an activated phospho-Asp-tRNA(Asn) or phospho-Glu-tRNA(Gln). In Bacillus cytotoxicus (strain DSM 22905 / CIP 110041 / 391-98 / NVH 391-98), this protein is Aspartyl/glutamyl-tRNA(Asn/Gln) amidotransferase subunit C.